Here is a 353-residue protein sequence, read N- to C-terminus: tRNA-specific 2-thiouridylase MnmA (353 aa).

ATP-binding positions include 7–14 (GLSGGVDS) and Leu33. Catalysis depends on Cys94, which acts as the Nucleophile. The cysteines at positions 94 and 193 are disulfide-linked. Gly119 contacts ATP. The interval 143-145 (KDQ) is interaction with tRNA. The active-site Cysteine persulfide intermediate is the Cys193. Positions 298–299 (RY) are interaction with tRNA.

The protein belongs to the MnmA/TRMU family.

The protein resides in the cytoplasm. The catalysed reaction is S-sulfanyl-L-cysteinyl-[protein] + uridine(34) in tRNA + AH2 + ATP = 2-thiouridine(34) in tRNA + L-cysteinyl-[protein] + A + AMP + diphosphate + H(+). Catalyzes the 2-thiolation of uridine at the wobble position (U34) of tRNA, leading to the formation of s(2)U34. The chain is tRNA-specific 2-thiouridylase MnmA from Picosynechococcus sp. (strain ATCC 27264 / PCC 7002 / PR-6) (Agmenellum quadruplicatum).